A 399-amino-acid polypeptide reads, in one-letter code: MEQPSLESMLELQRFPRNPFSLVLLLLYFPFGLCLFLIRLFIGAHVFLVSCVLPDSVFRRILLRVMSSVLGVYVSHSELRPWDQRGKILICNHRTAFDHSVISRIAPCCSPSVSCAPGFLCWARGFLELGALGSRTQLMESLKHYLSQPGGAPLLLFPEEDTTNGRTGLLHFSSWPFSLSDSVQPLSLTVQRPLIAVAVSGCSWVTELFWLLFIPFTVYQVRWLPSVCRLPRESDEDFACRVQQIVSLSLGVVATRHTAADRAEYVKRRRCELPAPKSQPLSPTHIQMAQHVKEVLPQVPLSAIHRDLGHTGCVDTTITNFLEGRVTFVAEEEETTGAAEGTSKSRVSRPLPQGFAKKPEDRHLSLQDRKQILYECARRKYLEKFGSVPGEEEEEGARG.

The Cytoplasmic segment spans residues Met1–Ser21. The stretch at Leu22–Ile42 is an intramembrane region. Residues Gly43–Gly399 are Cytoplasmic-facing. The CUE domain maps to Thr284–Val326. Residues Glu332 to Leu364 are disordered.

The protein belongs to the AUP1 family.

Its subcellular location is the endoplasmic reticulum membrane. The protein localises to the lipid droplet. Functionally, plays a role in the translocation of terminally misfolded proteins from the endoplasmic reticulum lumen to the cytoplasm and their degradation by the proteasome. Plays a role in lipid droplet formation. Induces lipid droplet clustering. This Xenopus laevis (African clawed frog) protein is Lipid droplet-regulating VLDL assembly factor AUP1.